We begin with the raw amino-acid sequence, 313 residues long: Pyrimidine-specific ribonucleoside hydrolase RihB (313 aa).

The active-site Proton acceptor is the Asp11. Ca(2+) is bound by residues Asp11, Asp16, and Val124. Residues Gln227 and His239 each contribute to the substrate site. Ca(2+) is bound at residue Asp240.

This sequence belongs to the IUNH family. RihB subfamily. As to quaternary structure, homotetramer. The cofactor is Ca(2+).

It catalyses the reaction a pyrimidine ribonucleoside + H2O = a pyrimidine nucleobase + D-ribose. Its function is as follows. Hydrolyzes cytidine or uridine to ribose and cytosine or uracil, respectively. Has a clear preference for cytidine over uridine. Strictly specific for ribonucleosides. The polypeptide is Pyrimidine-specific ribonucleoside hydrolase RihB (Escherichia coli O17:K52:H18 (strain UMN026 / ExPEC)).